The sequence spans 175 residues: Small ribosomal subunit protein bS16 (175 aa).

This sequence belongs to the bacterial ribosomal protein bS16 family.

The chain is Small ribosomal subunit protein bS16 from Cytophaga hutchinsonii (strain ATCC 33406 / DSM 1761 / CIP 103989 / NBRC 15051 / NCIMB 9469 / D465).